Reading from the N-terminus, the 408-residue chain is Imidazolonepropionase (408 aa).

Positions 72 and 74 each coordinate Fe(3+). Residues His72 and His74 each coordinate Zn(2+). 4-imidazolone-5-propanoate contacts are provided by Arg81, Tyr144, and His177. Position 144 (Tyr144) interacts with N-formimidoyl-L-glutamate. His242 lines the Fe(3+) pocket. A Zn(2+)-binding site is contributed by His242. Position 245 (Gln245) interacts with 4-imidazolone-5-propanoate. Residue Asp317 participates in Fe(3+) binding. Zn(2+) is bound at residue Asp317. The N-formimidoyl-L-glutamate site is built by Asn319 and Gly321. Thr322 is a 4-imidazolone-5-propanoate binding site.

Belongs to the metallo-dependent hydrolases superfamily. HutI family. The cofactor is Zn(2+). Fe(3+) is required as a cofactor.

It is found in the cytoplasm. The enzyme catalyses 4-imidazolone-5-propanoate + H2O = N-formimidoyl-L-glutamate. It functions in the pathway amino-acid degradation; L-histidine degradation into L-glutamate; N-formimidoyl-L-glutamate from L-histidine: step 3/3. In terms of biological role, catalyzes the hydrolytic cleavage of the carbon-nitrogen bond in imidazolone-5-propanoate to yield N-formimidoyl-L-glutamate. It is the third step in the universal histidine degradation pathway. In Aliivibrio fischeri (strain MJ11) (Vibrio fischeri), this protein is Imidazolonepropionase.